A 543-amino-acid chain; its full sequence is Chaperonin GroEL (543 aa).

Residues 31–34 (TMGP), 88–92 (DGTTT), glycine 415, 479–481 (DAL), and aspartate 495 each bind ATP.

It belongs to the chaperonin (HSP60) family. Forms a cylinder of 14 subunits composed of two heptameric rings stacked back-to-back. Interacts with the co-chaperonin GroES.

The protein resides in the cytoplasm. It catalyses the reaction ATP + H2O + a folded polypeptide = ADP + phosphate + an unfolded polypeptide.. Its function is as follows. Together with its co-chaperonin GroES, plays an essential role in assisting protein folding. The GroEL-GroES system forms a nano-cage that allows encapsulation of the non-native substrate proteins and provides a physical environment optimized to promote and accelerate protein folding. The protein is Chaperonin GroEL of Clostridium tetani (strain Massachusetts / E88).